The sequence spans 206 residues: Synaptosomal-associated protein 25 (206 aa).

Basic and acidic residues predominate over residues 1–20 (MAEDADMRNELEEMQRRADQ). The disordered stretch occupies residues 1 to 23 (MAEDADMRNELEEMQRRADQLAD). The t-SNARE coiled-coil homology 1 domain occupies 19 to 81 (DQLADESLES…KEAEKNLTDL (63 aa)). Residues Cys85, Cys88, Cys90, and Cys92 are each lipidated (S-palmitoyl cysteine). Position 138 is a phosphothreonine (Thr138). One can recognise a t-SNARE coiled-coil homology 2 domain in the interval 140 to 202 (DARENEMDEN…DEANQRATKM (63 aa)). At Ser187 the chain carries Phosphoserine.

The protein belongs to the SNAP-25 family. As to quaternary structure, part of the SNARE core complex containing SNAP25, VAMP2 and STX1A. This complex binds CPLX1. Interacts with TRIM9, RIMS1 and SNAPIN. Binds STXBP6. Found in a ternary complex with STX1A and VAMP8. Associates with the BLOC-1 complex. Isoform 1 and isoform 2 interact with BLOC1S6. Interacts with alpha-synuclein/SNCA. Palmitoylated. Cys-85 appears to be the main site, and palmitoylation is required for membrane association.

The protein resides in the membrane. The protein localises to the synapse. Its subcellular location is the synaptosome. It is found in the cell membrane. Its function is as follows. t-SNARE involved in the molecular regulation of neurotransmitter release. May play an important role in the synaptic function of specific neuronal systems. Associates with proteins involved in vesicle docking and membrane fusion. In Gallus gallus (Chicken), this protein is Synaptosomal-associated protein 25 (SNAP25).